Consider the following 357-residue polypeptide: Peptide chain release factor 1 (357 aa).

Gln234 carries the post-translational modification N5-methylglutamine. Positions 249–308 (PSGVEVSCQDEKSQHKNRSKAMRVLRSRVYEKKREEQQAEREEARRSMVGSGDRSAKIRT) are disordered. Positions 263 to 274 (HKNRSKAMRVLR) are enriched in basic residues. Basic and acidic residues predominate over residues 276–294 (RVYEKKREEQQAEREEARR).

This sequence belongs to the prokaryotic/mitochondrial release factor family. Methylated by PrmC. Methylation increases the termination efficiency of RF1.

Its subcellular location is the cytoplasm. Its function is as follows. Peptide chain release factor 1 directs the termination of translation in response to the peptide chain termination codons UAG and UAA. This is Peptide chain release factor 1 from Salinibacter ruber (strain DSM 13855 / M31).